The following is a 475-amino-acid chain: C3a anaphylatoxin chemotactic receptor (475 aa).

The Extracellular segment spans residues 1 to 23 (MESSSAETNSTGLHLEPQYQPET). Asparagine 9 is a glycosylation site (N-linked (GlcNAc...) asparagine). A helical transmembrane segment spans residues 24–46 (ILAMAILGLTFVLGLPGNGLVLW). Topologically, residues 47–57 (VAGLKMRRTVN) are cytoplasmic. A helical membrane pass occupies residues 58 to 80 (TVWFLHLTVADFVCCLSLPFSMA). At 81–96 (HLALRGYWPYGEILCK) the chain is on the extracellular side. Cysteine 95 and cysteine 172 are oxidised to a cystine. The chain crosses the membrane as a helical span at residues 97–118 (FIPTVIIFNMFASVFLLTAISL). Residues 119–139 (DRCLMVLKPIWCQNHRNVRTA) lie on the Cytoplasmic side of the membrane. Residues 140–160 (CIICGCIWLVAFVLCIPVFVY) form a helical membrane-spanning segment. At 161–331 (RETFTLENHT…RLLKVITFTR (171 aa)) the chain is on the extracellular side. An N-linked (GlcNAc...) asparagine glycan is attached at asparagine 168. Sulfotyrosine occurs at positions 174 and 183. N-linked (GlcNAc...) asparagine glycans are attached at residues asparagine 273 and asparagine 292. The chain crosses the membrane as a helical span at residues 332–351 (LVVGFLLPMIIMVACYTLII). Residues 352–368 (FRMRRVRVVKSWNKALH) are Cytoplasmic-facing. Residues 369–391 (LAMVVVTIFLICWAPYHVFGVLI) traverse the membrane as a helical segment. The Extracellular portion of the chain corresponds to 392–408 (LFINPESRVGAALLSWD). A helical membrane pass occupies residues 409-429 (HVSIALASANSCFNPFLYALL). Over 430–475 (GRDLRKRVRQSMKGILEAAFSEDISKSTSFIQAKAFSEKHSLSTNV) the chain is Cytoplasmic. The residue at position 450 (serine 450) is a Phosphoserine.

It belongs to the G-protein coupled receptor 1 family. As to quaternary structure, interacts with VGF-derived peptide TLQP-21. As to expression, expressed in the heart, kidney, lung, liver, peritoneal macrophages and spleen.

The protein localises to the cell membrane. Functionally, receptor for the chemotactic and inflammatory peptide anaphylatoxin C3a. This receptor stimulates chemotaxis, granule enzyme release and superoxide anion production. This Cavia porcellus (Guinea pig) protein is C3a anaphylatoxin chemotactic receptor (C3AR1).